Reading from the N-terminus, the 517-residue chain is Ladinin-1 (517 aa).

Residues 1-401 (MAVSRKDWSA…SASMKLPDNT (401 aa)) are disordered. Ser-38 carries the post-translational modification Phosphoserine. The span at 48 to 58 (LSQNGDRQASA) shows a compositional bias: polar residues. Ser-64, Ser-78, Ser-121, and Ser-123 each carry phosphoserine. Positions 120–131 (NSLSPVQATQKP) are enriched in polar residues. Composition is skewed to basic and acidic residues over residues 134-151 (SKKE…REQR) and 161-174 (LVGR…KGVP). SEK repeat units follow at residues 203–205 (SEK), 209–211 (SEK), 215–217 (SEK), 221–223 (SEK), 227–229 (SEK), 239–241 (SEK), 257–259 (SEK), and 269–271 (SEK). Residues 203–271 (SEKVLASEKT…IFEKALASEK (69 aa)) form an 8 X SEK repeats region. Over residues 219-233 (AVSEKRNSSEKKSVL) the composition is skewed to basic and acidic residues. Phosphoserine is present on residues Ser-347, Ser-356, and Ser-394. Polar residues predominate over residues 355–373 (SSPTQRTYSSSLKRSSPRT). The residue at position 424 (Arg-424) is an Omega-N-methylarginine. The segment at 481 to 517 (RTQESGDQDPQEAQKASSATERTQWGQKSDSSLDAEV) is disordered. Ser-485 carries the post-translational modification Phosphoserine. Polar residues predominate over residues 494–517 (QKASSATERTQWGQKSDSSLDAEV).

Its subcellular location is the secreted. The protein localises to the extracellular space. The protein resides in the extracellular matrix. It is found in the basement membrane. In terms of biological role, anchoring filament protein which is a component of the basement membrane zone. This chain is Ladinin-1 (LAD1), found in Homo sapiens (Human).